Reading from the N-terminus, the 89-residue chain is Large ribosomal subunit protein eL31 (89 aa).

The protein belongs to the eukaryotic ribosomal protein eL31 family.

The polypeptide is Large ribosomal subunit protein eL31 (rpl31e) (Thermoplasma acidophilum (strain ATCC 25905 / DSM 1728 / JCM 9062 / NBRC 15155 / AMRC-C165)).